We begin with the raw amino-acid sequence, 506 residues long: ATP synthase subunit alpha (506 aa).

An ATP-binding site is contributed by 172–179 (GDRKTGKT).

The protein belongs to the ATPase alpha/beta chains family. F-type ATPases have 2 components, CF(1) - the catalytic core - and CF(0) - the membrane proton channel. CF(1) has five subunits: alpha(3), beta(3), gamma(1), delta(1), epsilon(1). CF(0) has three main subunits: a(1), b(2) and c(9-12). The alpha and beta chains form an alternating ring which encloses part of the gamma chain. CF(1) is attached to CF(0) by a central stalk formed by the gamma and epsilon chains, while a peripheral stalk is formed by the delta and b chains.

It localises to the cell membrane. The enzyme catalyses ATP + H2O + 4 H(+)(in) = ADP + phosphate + 5 H(+)(out). Its function is as follows. Produces ATP from ADP in the presence of a proton gradient across the membrane. The alpha chain is a regulatory subunit. This is ATP synthase subunit alpha from Lactobacillus gasseri (strain ATCC 33323 / DSM 20243 / BCRC 14619 / CIP 102991 / JCM 1131 / KCTC 3163 / NCIMB 11718 / NCTC 13722 / AM63).